A 204-amino-acid polypeptide reads, in one-letter code: Probable nicotinate-nucleotide adenylyltransferase (204 aa).

It belongs to the NadD family.

The catalysed reaction is nicotinate beta-D-ribonucleotide + ATP + H(+) = deamido-NAD(+) + diphosphate. Its pathway is cofactor biosynthesis; NAD(+) biosynthesis; deamido-NAD(+) from nicotinate D-ribonucleotide: step 1/1. In terms of biological role, catalyzes the reversible adenylation of nicotinate mononucleotide (NaMN) to nicotinic acid adenine dinucleotide (NaAD). The protein is Probable nicotinate-nucleotide adenylyltransferase of Clostridium beijerinckii (strain ATCC 51743 / NCIMB 8052) (Clostridium acetobutylicum).